Here is a 389-residue protein sequence, read N- to C-terminus: Lipid-A-disaccharide synthase (389 aa).

The protein belongs to the LpxB family.

The enzyme catalyses a lipid X + a UDP-2-N,3-O-bis[(3R)-3-hydroxyacyl]-alpha-D-glucosamine = a lipid A disaccharide + UDP + H(+). It functions in the pathway bacterial outer membrane biogenesis; LPS lipid A biosynthesis. Functionally, condensation of UDP-2,3-diacylglucosamine and 2,3-diacylglucosamine-1-phosphate to form lipid A disaccharide, a precursor of lipid A, a phosphorylated glycolipid that anchors the lipopolysaccharide to the outer membrane of the cell. This chain is Lipid-A-disaccharide synthase, found in Albidiferax ferrireducens (strain ATCC BAA-621 / DSM 15236 / T118) (Rhodoferax ferrireducens).